The following is a 433-amino-acid chain: MLSYKKVLIVGRPNVGKSALFNRILDAKRSITESTYGVTRDLVEEVCKVGSFNFKLIDTGGFTILKDEISKIVVQKVLSSLEKVDLILLVLDVNEILLEDYEIIERLRKYSSKVILVLNKVDTKDKEFLAHKFHNLGFKRYFLVSALHRRGITKLRDFLKVEVGRVNIEEEVNIKVGIIGKPNSGKSTLINYLSGNEISIVSDQPGTTRDFIKTKLTRNGKVFEIIDTAGIRRRARVNEVVEYYSVNRALKVIDIVDIVFLLIDVEEELTSQDKKIAHYVTKKGKGIIIVFSKWDLLEESKGYFETLKGRVKFFFPVLNFAPIFRISVYKKIGLDSLFKEALKVKDQLELKTNTPDLNKMLNLWIKDYHLNISHKIKYITQVSTNPVKFILFANKIKNFPNSYYNYLVNNLRKIGYKNIPILVELREKIRDLK.

EngA-type G domains lie at 5-167 (KKVL…GRVN) and 174-349 (IKVG…DQLE). GTP is bound by residues 11 to 18 (GRPNVGKS), 58 to 62 (DTGGF), 119 to 122 (NKVD), 180 to 187 (GKPNSGKS), 227 to 231 (DTAGI), and 292 to 295 (SKWD). The 81-residue stretch at 349–429 (ELKTNTPDLN…PILVELREKI (81 aa)) folds into the KH-like domain.

It belongs to the TRAFAC class TrmE-Era-EngA-EngB-Septin-like GTPase superfamily. EngA (Der) GTPase family. As to quaternary structure, associates with the 50S ribosomal subunit.

GTPase that plays an essential role in the late steps of ribosome biogenesis. This is GTPase Der from Borrelia garinii subsp. bavariensis (strain ATCC BAA-2496 / DSM 23469 / PBi) (Borreliella bavariensis).